Here is a 791-residue protein sequence, read N- to C-terminus: Organellar oligopeptidase A, chloroplastic/mitochondrial (791 aa).

Residues Met1–Ala82 constitute a chloroplast and mitochondrion transit peptide. Coiled-coil stretches lie at residues Arg118–Ser138 and Asp239–Lys259. Zn(2+) is bound at residue His571. Residue Glu572 is part of the active site. Residues His575 and Glu601 each contribute to the Zn(2+) site. His703 to Tyr709 serves as a coordination point for substrate.

The protein belongs to the peptidase M3 family. Zn(2+) serves as cofactor.

It localises to the mitochondrion matrix. It is found in the plastid. Its subcellular location is the chloroplast stroma. The catalysed reaction is Hydrolysis of oligopeptides, with broad specificity. Gly or Ala commonly occur as P1 or P1' residues, but more distant residues are also important, as is shown by the fact that Z-Gly-Pro-Gly-|-Gly-Pro-Ala is cleaved, but not Z-(Gly)(5).. Its activity is regulated as follows. Inhibited by salicylic acid. Functionally, oligopeptidase degrading short peptides from 8 to 23 amino acid residues. Plays a role in the degradation of transit peptides and of peptides derived from other proteolytic events. Does not exhibit a strict cleavage pattern. Binds salicylic acid. The chain is Organellar oligopeptidase A, chloroplastic/mitochondrial from Arabidopsis thaliana (Mouse-ear cress).